The chain runs to 161 residues: Putative 4-hydroxy-4-methyl-2-oxoglutarate aldolase (161 aa).

Substrate is bound by residues 78–81 (GDVI) and Arg-100. Position 101 (Asp-101) interacts with a divalent metal cation.

The protein belongs to the class II aldolase/RraA-like family. As to quaternary structure, homotrimer. The cofactor is a divalent metal cation.

It carries out the reaction 4-hydroxy-4-methyl-2-oxoglutarate = 2 pyruvate. It catalyses the reaction oxaloacetate + H(+) = pyruvate + CO2. Its function is as follows. Catalyzes the aldol cleavage of 4-hydroxy-4-methyl-2-oxoglutarate (HMG) into 2 molecules of pyruvate. Also contains a secondary oxaloacetate (OAA) decarboxylase activity due to the common pyruvate enolate transition state formed following C-C bond cleavage in the retro-aldol and decarboxylation reactions. The chain is Putative 4-hydroxy-4-methyl-2-oxoglutarate aldolase from Mycobacterium avium (strain 104).